The following is a 335-amino-acid chain: UPF0353 protein MAV335 (335 aa).

The next 2 membrane-spanning stretches (helical) occupy residues 18–38 and 67–87; these read WFFL…LMQL and LPAI…AGPT. The VWFA domain maps to 98–295; sequence VVMLVIDVSQ…QELKSVYATL (198 aa). A helical transmembrane segment spans residues 309-329; sequence SVGWVRLGALVLRLAADALLI.

It belongs to the UPF0353 family.

Its subcellular location is the cell membrane. The polypeptide is UPF0353 protein MAV335 (Mycobacterium avium).